A 204-amino-acid polypeptide reads, in one-letter code: Recombination protein RecR (204 aa).

Residues 58–75 (CSICQNVTDRGDDPCSIC) form a C4-type zinc finger. Positions 83 to 181 (SKICVVESPP…EVTKIARGIP (99 aa)) constitute a Toprim domain.

The protein belongs to the RecR family.

In terms of biological role, may play a role in DNA repair. It seems to be involved in an RecBC-independent recombinational process of DNA repair. It may act with RecF and RecO. In Chlorobium phaeobacteroides (strain BS1), this protein is Recombination protein RecR.